The chain runs to 249 residues: MTRVAVNGVTGQMGGAVIEAATDSEVVVGFATSDTDAVDDVPVVHPAEAAAALREYDVDVVVDFAVPKGALTVAEACVEAGVPMVVGTTGFDEDGLARLQDASEEIPLLKATNFSQGIQVLQRLISEAVGTLDDYDLELMETHHNRKVDAPSGTASSILDVIQEERDVEPVYGREGHAPREDDEIGVFARRAGDVRGEHELVLAGNDEVLSLSHRAEDRGVFAAGALDAATWLVGRDSGWYEFGDVVDA.

NAD(+)-binding positions include 8–13 (GVTGQM), 87–89 (GTT), and 111–114 (ATNF). The active-site Proton donor/acceptor is the His143. Position 144 (His144) interacts with (S)-2,3,4,5-tetrahydrodipicolinate. Catalysis depends on Lys147, which acts as the Proton donor. 153-154 (GT) provides a ligand contact to (S)-2,3,4,5-tetrahydrodipicolinate.

Belongs to the DapB family.

The protein resides in the cytoplasm. The catalysed reaction is (S)-2,3,4,5-tetrahydrodipicolinate + NAD(+) + H2O = (2S,4S)-4-hydroxy-2,3,4,5-tetrahydrodipicolinate + NADH + H(+). It catalyses the reaction (S)-2,3,4,5-tetrahydrodipicolinate + NADP(+) + H2O = (2S,4S)-4-hydroxy-2,3,4,5-tetrahydrodipicolinate + NADPH + H(+). The protein operates within amino-acid biosynthesis; L-lysine biosynthesis via DAP pathway; (S)-tetrahydrodipicolinate from L-aspartate: step 4/4. Functionally, catalyzes the conversion of 4-hydroxy-tetrahydrodipicolinate (HTPA) to tetrahydrodipicolinate. This chain is 4-hydroxy-tetrahydrodipicolinate reductase, found in Haloarcula marismortui (strain ATCC 43049 / DSM 3752 / JCM 8966 / VKM B-1809) (Halobacterium marismortui).